Reading from the N-terminus, the 215-residue chain is Interleukin-12 subunit alpha (215 aa).

Residues 1-22 form the signal peptide; that stretch reads MCQSRYLLFLATLALLNHLSLA. Intrachain disulfides connect Cys-33–Cys-106, Cys-60–Cys-192, and Cys-81–Cys-119. N-linked (GlcNAc...) asparagine glycosylation is present at Asn-89.

The protein belongs to the IL-6 superfamily. Heterodimer with IL12B; disulfide-linked. This heterodimer is known as interleukin IL-12. Heterodimer with EBI3/IL27B; not disulfide-linked. This heterodimer is known as interleukin IL-35. Interacts with NBR1; this interaction promotes IL-12 secretion.

Its subcellular location is the secreted. Heterodimerizes with IL12B to form the IL-12 cytokine or with EBI3/IL27B to form the IL-35 cytokine. IL-12 is primarily produced by professional antigen-presenting cells (APCs) such as B-cells and dendritic cells (DCs) as well as macrophages and granulocytes and regulates T-cell and natural killer-cell responses, induces the production of interferon-gamma (IFN-gamma), favors the differentiation of T-helper 1 (Th1) cells and is an important link between innate resistance and adaptive immunity. Mechanistically, exerts its biological effects through a receptor composed of IL12R1 and IL12R2 subunits. Binding to the receptor results in the rapid tyrosine phosphorylation of a number of cellular substrates including the JAK family kinases TYK2 and JAK2. In turn, recruited STAT4 gets phosphorylated and translocates to the nucleus where it regulates cytokine/growth factor responsive genes. As part of IL-35, plays essential roles in maintaining the immune homeostasis of the liver microenvironment and also functions as an immune-suppressive cytokine. Mediates biological events through unconventional receptors composed of IL12RB2 and gp130/IL6ST heterodimers or homodimers. Signaling requires the transcription factors STAT1 and STAT4, which form a unique heterodimer that binds to distinct DNA sites. The polypeptide is Interleukin-12 subunit alpha (Il12a) (Mus musculus (Mouse)).